The primary structure comprises 444 residues: Serine--tRNA ligase (444 aa).

Position 243-245 (243-245) interacts with L-serine; the sequence is TAE. Position 274-276 (274-276) interacts with ATP; sequence RSE. Glu-297 lines the L-serine pocket. 361 to 364 serves as a coordination point for ATP; sequence EISS. An L-serine-binding site is contributed by Ser-397.

It belongs to the class-II aminoacyl-tRNA synthetase family. Type-1 seryl-tRNA synthetase subfamily. Homodimer. The tRNA molecule binds across the dimer.

The protein resides in the cytoplasm. It carries out the reaction tRNA(Ser) + L-serine + ATP = L-seryl-tRNA(Ser) + AMP + diphosphate + H(+). The catalysed reaction is tRNA(Sec) + L-serine + ATP = L-seryl-tRNA(Sec) + AMP + diphosphate + H(+). It participates in aminoacyl-tRNA biosynthesis; selenocysteinyl-tRNA(Sec) biosynthesis; L-seryl-tRNA(Sec) from L-serine and tRNA(Sec): step 1/1. Functionally, catalyzes the attachment of serine to tRNA(Ser). Is also able to aminoacylate tRNA(Sec) with serine, to form the misacylated tRNA L-seryl-tRNA(Sec), which will be further converted into selenocysteinyl-tRNA(Sec). This Acidobacterium capsulatum (strain ATCC 51196 / DSM 11244 / BCRC 80197 / JCM 7670 / NBRC 15755 / NCIMB 13165 / 161) protein is Serine--tRNA ligase.